The primary structure comprises 119 residues: Large ribosomal subunit protein bL20 (119 aa).

The protein belongs to the bacterial ribosomal protein bL20 family.

In terms of biological role, binds directly to 23S ribosomal RNA and is necessary for the in vitro assembly process of the 50S ribosomal subunit. It is not involved in the protein synthesizing functions of that subunit. The protein is Large ribosomal subunit protein bL20 of Heliobacterium modesticaldum (strain ATCC 51547 / Ice1).